The primary structure comprises 288 residues: Cyclin-dependent kinase 2 homolog (288 aa).

Positions 4-284 (YHGLEKIGEG…AKQAIEHPYF (281 aa)) constitute a Protein kinase domain. ATP contacts are provided by residues 10–18 (IGEGTYGVV) and Lys32. Thr14 is modified (phosphothreonine). The residue at position 15 (Tyr15) is a Phosphotyrosine. The Proton acceptor role is filled by Asp125. Thr158 bears the Phosphothreonine mark.

It belongs to the protein kinase superfamily. CMGC Ser/Thr protein kinase family. CDC2/CDKX subfamily. In terms of assembly, may form a complex composed of at least the catalytic subunit CRK2 and a cyclin. Mg(2+) is required as a cofactor.

The protein resides in the cytoplasm. It carries out the reaction L-seryl-[protein] + ATP = O-phospho-L-seryl-[protein] + ADP + H(+). The catalysed reaction is L-threonyl-[protein] + ATP = O-phospho-L-threonyl-[protein] + ADP + H(+). The enzyme catalyses [DNA-directed RNA polymerase] + ATP = phospho-[DNA-directed RNA polymerase] + ADP + H(+). With respect to regulation, phosphorylation at Thr-14 or Tyr-15 inactivates the enzyme, while phosphorylation at Thr-158 activates it. In terms of biological role, serine/threonine-protein kinase. Involved in the control of the cell cycle. Required for entry into S-phase and mitosis. Probable component of the kinase complex that phosphorylates the repetitive C-terminus of RNA polymerase II. This is Cyclin-dependent kinase 2 homolog from Plasmodium berghei (strain Anka).